A 644-amino-acid chain; its full sequence is ATP-dependent zinc metalloprotease FtsH (644 aa).

Residues 1–4 (MAKN) lie on the Cytoplasmic side of the membrane. A helical membrane pass occupies residues 5 to 25 (LILWLVIAVVLMSVFQSFGPS). Residues 26–98 (ESNGRKVDYS…VGEPPEEPSL (73 aa)) lie on the Periplasmic side of the membrane. A helical membrane pass occupies residues 99–119 (LASIFISWFPMLLLIGVWIFF). Residues 120-644 (MRQMQGGGGK…NTMSEQLGDK (525 aa)) lie on the Cytoplasmic side of the membrane. 192-199 (GPPGTGKT) serves as a coordination point for ATP. His414 contacts Zn(2+). Glu415 is an active-site residue. Zn(2+) is bound by residues His418 and Asp492. Residues 598–644 (VRPPAGWEEPGASNNSGDNGSPKAPRPVDEPRTPNPGNTMSEQLGDK) are disordered. Positions 632–644 (NPGNTMSEQLGDK) are enriched in polar residues.

It in the central section; belongs to the AAA ATPase family. In the C-terminal section; belongs to the peptidase M41 family. Homohexamer. Zn(2+) serves as cofactor.

The protein resides in the cell inner membrane. In terms of biological role, acts as a processive, ATP-dependent zinc metallopeptidase for both cytoplasmic and membrane proteins. Plays a role in the quality control of integral membrane proteins. In Shigella flexneri, this protein is ATP-dependent zinc metalloprotease FtsH.